The following is a 795-amino-acid chain: ATP-dependent RNA helicase DRS1 (795 aa).

Disordered regions lie at residues 1–127 and 162–276; these read MAPS…DEEG and EKKK…GGLS. A compositionally biased stretch (acidic residues) spans 21 to 34; the sequence is DNDEPDILDEEEET. Residues 56-70 are compositionally biased toward basic residues; it reads KGKKNKKEKKGKKGG. 5 stretches are compositionally biased toward acidic residues: residues 78–90, 98–108, 172–195, 204–225, and 240–252; these read DGED…EEEV, DADDGAMDSDF, VEEE…EVLA, EDGE…EAAS, and EASE…DAEE. The Q motif motif lies at 276 to 304; the sequence is SSFQGMSLSRPILRGLTSVGFTKPTPIQA. The Helicase ATP-binding domain occupies 307–481; it reads IPIALMGKDV…RVGLNKPARI (175 aa). Residue 320 to 327 participates in ATP binding; it reads AVTGSGKT. The short motif at 429–432 is the DEAD box element; it reads DEAD. Residues 466–684 form the Helicase C-terminal domain; the sequence is TVDKLIRVGL…EKQLAQIEMQ (219 aa). A disordered region spans residues 703–795; it reads KRTWFETQED…KAPAGRKGRR (93 aa). Composition is skewed to basic and acidic residues over residues 710–721 and 740–756; these read QEDKKKAKELGR and SNKD…RSES. Basic residues predominate over residues 779-795; it reads KVTKPKSKAPAGRKGRR.

Belongs to the DEAD box helicase family. DDX27/DRS1 subfamily. As to quaternary structure, associates with pre-ribosomal particles.

The protein localises to the nucleus. Its subcellular location is the nucleolus. It carries out the reaction ATP + H2O = ADP + phosphate + H(+). In terms of biological role, ATP-binding RNA helicase involved in ribosome assembly. The sequence is that of ATP-dependent RNA helicase DRS1 (DRS1) from Chaetomium globosum (strain ATCC 6205 / CBS 148.51 / DSM 1962 / NBRC 6347 / NRRL 1970) (Soil fungus).